A 513-amino-acid chain; its full sequence is Autophagy-related protein 18 (513 aa).

A WD 1 repeat occupies serine 2–glutamine 40. Residues asparagine 167 to lysine 225 are disordered. The span at lysine 172–histidine 195 shows a compositional bias: basic and acidic residues. The span at asparagine 205 to lysine 225 shows a compositional bias: low complexity. The stretch at alanine 248–glutamine 288 is one WD 2 repeat. The segment at phenylalanine 289 to glycine 292 is necessary for proper localization to vacuole membrane. The L/FRRG motif signature appears at phenylalanine 289–threonine 293. Residues threonine 293–threonine 332 form a WD 3 repeat. The interval lysine 333–serine 398 is disordered. A compositionally biased stretch (acidic residues) spans asparagine 338–alanine 369.

Belongs to the WD repeat PROPPIN family. In terms of assembly, component of the PI(3,5)P2 regulatory complex. Interacts with ATG2 and ATG9. The ATG2-ATG18 complex is essential for autophagosome formation.

The protein resides in the preautophagosomal structure membrane. Its subcellular location is the vacuole membrane. The protein localises to the endosome membrane. Component of the PI(3,5)P2 regulatory complex that regulates both the synthesis and turnover of phosphatidylinositol 3,5-bisphosphate (PtdIns(3,5)P2). Plays an important role in osmotically-induced vacuole fragmentation. Required for cytoplasm to vacuole transport (Cvt) vesicle formation, pexophagy and starvation-induced autophagy. Involved in correct ATG9 trafficking to the pre-autophagosomal structure. With ATG2, protects ATG8 from ATG4-mediated cleavage. The polypeptide is Autophagy-related protein 18 (Kluyveromyces marxianus (strain DMKU3-1042 / BCC 29191 / NBRC 104275) (Yeast)).